Here is a 200-residue protein sequence, read N- to C-terminus: Small ribosomal subunit protein eS1 (200 aa).

This sequence belongs to the eukaryotic ribosomal protein eS1 family.

The sequence is that of Small ribosomal subunit protein eS1 from Thermococcus gammatolerans (strain DSM 15229 / JCM 11827 / EJ3).